Reading from the N-terminus, the 500-residue chain is NAD(P)H-quinone oxidoreductase chain 4, chloroplastic (500 aa).

Helical transmembrane passes span 4–24 (FPWL…IFFL), 37–57 (ICIC…HFQL), 87–107 (IGPI…AWPV), 113–130 (LFHF…GLFS), 134–154 (LLLF…LLSM), 167–187 (FILY…GMGL), 211–231 (ILFY…IPLH), 242–262 (HYST…YGLV), 272–292 (AHSI…IYAA), 305–325 (IAYS…SITD), 330–350 (GAIL…FLAG), 386–406 (LALP…GIIT), 416–436 (ILIT…LLSM), and 462–482 (LFVS…PDFV).

This sequence belongs to the complex I subunit 4 family.

It localises to the plastid. Its subcellular location is the chloroplast thylakoid membrane. The enzyme catalyses a plastoquinone + NADH + (n+1) H(+)(in) = a plastoquinol + NAD(+) + n H(+)(out). The catalysed reaction is a plastoquinone + NADPH + (n+1) H(+)(in) = a plastoquinol + NADP(+) + n H(+)(out). In Acorus calamus var. americanus (American sweet flag), this protein is NAD(P)H-quinone oxidoreductase chain 4, chloroplastic.